Here is a 122-residue protein sequence, read N- to C-terminus: Basic phospholipase A2 (122 aa).

7 disulfide bridges follow: Cys-26–Cys-115, Cys-28–Cys-44, Cys-43–Cys-95, Cys-49–Cys-122, Cys-50–Cys-88, Cys-57–Cys-81, and Cys-75–Cys-86. The Ca(2+) site is built by Tyr-27, Gly-29, and Gly-31. His-47 is an active-site residue. Asp-48 provides a ligand contact to Ca(2+). Asp-89 is an active-site residue.

The protein belongs to the phospholipase A2 family. Group II subfamily. D49 sub-subfamily. Homodimer. The cofactor is Ca(2+). Expressed by the venom gland.

The protein resides in the secreted. It carries out the reaction a 1,2-diacyl-sn-glycero-3-phosphocholine + H2O = a 1-acyl-sn-glycero-3-phosphocholine + a fatty acid + H(+). In terms of biological role, snake venom phospholipase A2 (PLA2) that inhibits neuromuscular transmission by blocking acetylcholine release from the nerve termini. PLA2 catalyzes the calcium-dependent hydrolysis of the 2-acyl groups in 3-sn-phosphoglycerides. This is Basic phospholipase A2 from Gloydius blomhoffii (Mamushi).